Reading from the N-terminus, the 431-residue chain is Glutamate-1-semialdehyde 2,1-aminomutase (431 aa).

An N6-(pyridoxal phosphate)lysine modification is found at K269.

The protein belongs to the class-III pyridoxal-phosphate-dependent aminotransferase family. HemL subfamily. Homodimer. The cofactor is pyridoxal 5'-phosphate.

It localises to the cytoplasm. The catalysed reaction is (S)-4-amino-5-oxopentanoate = 5-aminolevulinate. The protein operates within porphyrin-containing compound metabolism; protoporphyrin-IX biosynthesis; 5-aminolevulinate from L-glutamyl-tRNA(Glu): step 2/2. It participates in porphyrin-containing compound metabolism; chlorophyll biosynthesis. This is Glutamate-1-semialdehyde 2,1-aminomutase from Chlorobium luteolum (strain DSM 273 / BCRC 81028 / 2530) (Pelodictyon luteolum).